Here is a 137-residue protein sequence, read N- to C-terminus: MFKTILLAYDGSDHAKRAAAVAKAEAQAHGARLLVVHAYEPVPDYLGEPFFEEALKRRLERAEKVRAEAMALTGVPREDALLLQGRPAEAILQAAIGEKADLIVMGTRGLGAVGSLFLGSQSQKVVAEAPCPVLLVR.

The protein belongs to the universal stress protein A family.

The sequence is that of Universal stress protein in QAH/OAS sulfhydrylase 3'region from Thermus aquaticus.